The chain runs to 374 residues: Inner membrane transport permease YhhJ (374 aa).

Over 1-22 the chain is Cytoplasmic; sequence MRHLRNIFNLGIKELRSLLGDK. A helical transmembrane segment spans residues 23–43; sequence AMLTLIVFSFTVSVYSSATVT. Residues 44-172 are Periplasmic-facing; sequence PGSLNLAPIA…TRMRFNPNLD (129 aa). The ABC transmembrane type-2 domain maps to 133–369; it reads NGYIQNIING…TIALLRFRKT (237 aa). Residues 173–193 traverse the membrane as a helical segment; sequence PAWFGGVMAIINNITMLAIVL. The Cytoplasmic portion of the chain corresponds to 194 to 229; sequence TGSALIREREHGTVEHLLVMPITPFEIMMAKIWSMG. The chain crosses the membrane as a helical span at residues 230–250; the sequence is LVVLVVSGLSLVLMVKGVLGV. Over 251 to 255 the chain is Periplasmic; sequence PIEGS. Residues 256-276 form a helical membrane-spanning segment; it reads IPLFMLGVALSLFATTSIGIF. Residues 277-283 lie on the Cytoplasmic side of the membrane; sequence MGTIARS. A helical transmembrane segment spans residues 284–304; that stretch reads MPQLGLLVILVLLPLQMLSGG. The Periplasmic segment spans residues 305 to 342; that stretch reads STPRESMPQMVQDIMLTMPTTHFVSLAQAILYRGAGFE. The chain crosses the membrane as a helical span at residues 343 to 363; it reads IVWPQFLTLMAIGGAFFTIAL. Residues 364–374 lie on the Cytoplasmic side of the membrane; the sequence is LRFRKTIGTMA.

Belongs to the ABC-2 integral membrane protein family.

The protein localises to the cell inner membrane. The polypeptide is Inner membrane transport permease YhhJ (yhhJ) (Escherichia coli (strain K12)).